The sequence spans 274 residues: 4-diphosphocytidyl-2-C-methyl-D-erythritol kinase (274 aa).

The active site involves K7. P90–S100 contributes to the ATP binding site. D132 is a catalytic residue.

Belongs to the GHMP kinase family. IspE subfamily.

The enzyme catalyses 4-CDP-2-C-methyl-D-erythritol + ATP = 4-CDP-2-C-methyl-D-erythritol 2-phosphate + ADP + H(+). It participates in isoprenoid biosynthesis; isopentenyl diphosphate biosynthesis via DXP pathway; isopentenyl diphosphate from 1-deoxy-D-xylulose 5-phosphate: step 3/6. In terms of biological role, catalyzes the phosphorylation of the position 2 hydroxy group of 4-diphosphocytidyl-2C-methyl-D-erythritol. The sequence is that of 4-diphosphocytidyl-2-C-methyl-D-erythritol kinase from Dechloromonas aromatica (strain RCB).